The primary structure comprises 264 residues: NAD-capped RNA hydrolase NudC (264 aa).

2 residues coordinate Zn(2+): cysteine 99 and cysteine 102. Substrate is bound at residue glutamate 112. Positions 117 and 120 each coordinate Zn(2+). Substrate is bound at residue tyrosine 125. Positions proline 126 to threonine 253 constitute a Nudix hydrolase domain. Alanine 162, glutamate 178, and glutamate 182 together coordinate a divalent metal cation. A Nudix box motif is present at residues glycine 163 to glycine 184. Residue glutamine 196–serine 203 participates in substrate binding. Glutamate 223 provides a ligand contact to a divalent metal cation. Residue alanine 246 coordinates substrate.

The protein belongs to the Nudix hydrolase family. NudC subfamily. As to quaternary structure, homodimer. It depends on Mg(2+) as a cofactor. Requires Mn(2+) as cofactor. Zn(2+) is required as a cofactor.

The enzyme catalyses a 5'-end NAD(+)-phospho-ribonucleoside in mRNA + H2O = a 5'-end phospho-adenosine-phospho-ribonucleoside in mRNA + beta-nicotinamide D-ribonucleotide + 2 H(+). The catalysed reaction is NAD(+) + H2O = beta-nicotinamide D-ribonucleotide + AMP + 2 H(+). It catalyses the reaction NADH + H2O = reduced beta-nicotinamide D-ribonucleotide + AMP + 2 H(+). In terms of biological role, mRNA decapping enzyme that specifically removes the nicotinamide adenine dinucleotide (NAD) cap from a subset of mRNAs by hydrolyzing the diphosphate linkage to produce nicotinamide mononucleotide (NMN) and 5' monophosphate mRNA. The NAD-cap is present at the 5'-end of some mRNAs and stabilizes RNA against 5'-processing. Has preference for mRNAs with a 5'-end purine. Catalyzes the hydrolysis of a broad range of dinucleotide pyrophosphates. The chain is NAD-capped RNA hydrolase NudC from Haemophilus influenzae (strain PittGG).